We begin with the raw amino-acid sequence, 187 residues long: Elongation factor P (187 aa).

It belongs to the elongation factor P family.

It is found in the cytoplasm. It functions in the pathway protein biosynthesis; polypeptide chain elongation. Functionally, involved in peptide bond synthesis. Stimulates efficient translation and peptide-bond synthesis on native or reconstituted 70S ribosomes in vitro. Probably functions indirectly by altering the affinity of the ribosome for aminoacyl-tRNA, thus increasing their reactivity as acceptors for peptidyl transferase. The protein is Elongation factor P of Desulforapulum autotrophicum (strain ATCC 43914 / DSM 3382 / VKM B-1955 / HRM2) (Desulfobacterium autotrophicum).